Consider the following 315-residue polypeptide: Acetyl-coenzyme A carboxylase carboxyl transferase subunit alpha (315 aa).

In terms of domain architecture, CoA carboxyltransferase C-terminal spans 36–289 (LGKKRLELME…RKAVAAELKV (254 aa)).

This sequence belongs to the AccA family. In terms of assembly, acetyl-CoA carboxylase is a heterohexamer composed of biotin carboxyl carrier protein (AccB), biotin carboxylase (AccC) and two subunits each of ACCase subunit alpha (AccA) and ACCase subunit beta (AccD).

It localises to the cytoplasm. The catalysed reaction is N(6)-carboxybiotinyl-L-lysyl-[protein] + acetyl-CoA = N(6)-biotinyl-L-lysyl-[protein] + malonyl-CoA. It functions in the pathway lipid metabolism; malonyl-CoA biosynthesis; malonyl-CoA from acetyl-CoA: step 1/1. In terms of biological role, component of the acetyl coenzyme A carboxylase (ACC) complex. First, biotin carboxylase catalyzes the carboxylation of biotin on its carrier protein (BCCP) and then the CO(2) group is transferred by the carboxyltransferase to acetyl-CoA to form malonyl-CoA. The protein is Acetyl-coenzyme A carboxylase carboxyl transferase subunit alpha of Francisella philomiragia subsp. philomiragia (strain ATCC 25017 / CCUG 19701 / FSC 153 / O#319-036).